The primary structure comprises 191 residues: Peptidyl-tRNA hydrolase (191 aa).

A tRNA-binding site is contributed by Tyr16. His21 serves as the catalytic Proton acceptor. The tRNA site is built by Phe67, Asn69, and Asn115.

It belongs to the PTH family. In terms of assembly, monomer.

Its subcellular location is the cytoplasm. It carries out the reaction an N-acyl-L-alpha-aminoacyl-tRNA + H2O = an N-acyl-L-amino acid + a tRNA + H(+). Hydrolyzes ribosome-free peptidyl-tRNAs (with 1 or more amino acids incorporated), which drop off the ribosome during protein synthesis, or as a result of ribosome stalling. Functionally, catalyzes the release of premature peptidyl moieties from peptidyl-tRNA molecules trapped in stalled 50S ribosomal subunits, and thus maintains levels of free tRNAs and 50S ribosomes. This chain is Peptidyl-tRNA hydrolase, found in Ruthia magnifica subsp. Calyptogena magnifica.